We begin with the raw amino-acid sequence, 216 residues long: Large ribosomal subunit protein uL3 (216 aa).

Q157 carries the N5-methylglutamine modification.

Belongs to the universal ribosomal protein uL3 family. As to quaternary structure, part of the 50S ribosomal subunit. Forms a cluster with proteins L14 and L19. Methylated by PrmB.

Its function is as follows. One of the primary rRNA binding proteins, it binds directly near the 3'-end of the 23S rRNA, where it nucleates assembly of the 50S subunit. This is Large ribosomal subunit protein uL3 from Xanthomonas campestris pv. campestris (strain 8004).